Consider the following 149-residue polypeptide: Sex-regulated protein janus-A (149 aa).

Lys46 contacts substrate. The active-site Proton acceptor is His77. Substrate is bound at residue 118–120; that stretch reads STG.

It belongs to the janus family.

In terms of biological role, janA and janB regulate somatic sex differentiation. The chain is Sex-regulated protein janus-A (janA) from Drosophila pseudoobscura pseudoobscura (Fruit fly).